Here is a 343-residue protein sequence, read N- to C-terminus: N-acetyl-gamma-glutamyl-phosphate reductase (343 aa).

C146 is an active-site residue.

This sequence belongs to the NAGSA dehydrogenase family. Type 1 subfamily.

It localises to the cytoplasm. It catalyses the reaction N-acetyl-L-glutamate 5-semialdehyde + phosphate + NADP(+) = N-acetyl-L-glutamyl 5-phosphate + NADPH + H(+). The protein operates within amino-acid biosynthesis; L-arginine biosynthesis; N(2)-acetyl-L-ornithine from L-glutamate: step 3/4. Its function is as follows. Catalyzes the NADPH-dependent reduction of N-acetyl-5-glutamyl phosphate to yield N-acetyl-L-glutamate 5-semialdehyde. The protein is N-acetyl-gamma-glutamyl-phosphate reductase of Pseudarthrobacter chlorophenolicus (strain ATCC 700700 / DSM 12829 / CIP 107037 / JCM 12360 / KCTC 9906 / NCIMB 13794 / A6) (Arthrobacter chlorophenolicus).